Here is a 164-residue protein sequence, read N- to C-terminus: Large ribosomal subunit protein uL10 (164 aa).

Belongs to the universal ribosomal protein uL10 family. In terms of assembly, part of the ribosomal stalk of the 50S ribosomal subunit. The N-terminus interacts with L11 and the large rRNA to form the base of the stalk. The C-terminus forms an elongated spine to which L12 dimers bind in a sequential fashion forming a multimeric L10(L12)X complex.

In terms of biological role, forms part of the ribosomal stalk, playing a central role in the interaction of the ribosome with GTP-bound translation factors. This is Large ribosomal subunit protein uL10 (rplJ) from Helicobacter pylori (strain J99 / ATCC 700824) (Campylobacter pylori J99).